Here is a 236-residue protein sequence, read N- to C-terminus: Syntaxin-8 (236 aa).

Residues 1-215 (MAPDPWFSTY…MVDRKSASCG (215 aa)) lie on the Cytoplasmic side of the membrane. The stretch at 42 to 65 (VTIRALLQNLKEKIALLKDLLLRA) forms a coiled coil. The t-SNARE coiled-coil homology domain maps to 145-207 (QKIIQEQDAG…RNETRRVNMV (63 aa)). At S160 the chain carries Phosphoserine. A helical; Anchor for type IV membrane protein transmembrane segment spans residues 216 to 232 (MIMVILLLLVAIVVVAV). The Vesicular segment spans residues 233–236 (WPTN).

It belongs to the syntaxin family. As to quaternary structure, forms a SNARE complex with STX7, VTI1B and VAMP8 which functions in the homotypic fusion of late endosomes. Part of the SNARE core complex containing STX7, VAMP8 and VTI1B. Interacts with VAMP8. Interacts with HECTD3. Interacts with TPC1. In terms of processing, ubiquitinated by HECTD3. Highly expressed in heart. Also found in brain, kidney, liver, lung, placenta, skeletal muscle, spleen and pancreas.

It is found in the membrane. In terms of biological role, vesicle trafficking protein that functions in the early secretory pathway, possibly by mediating retrograde transport from cis-Golgi membranes to the ER. The chain is Syntaxin-8 (STX8) from Homo sapiens (Human).